Reading from the N-terminus, the 637-residue chain is tRNA uridine 5-carboxymethylaminomethyl modification enzyme MnmG (637 aa).

Residues 15-20 (GAGHAG), Ile127, and Ser182 contribute to the FAD site. An NAD(+)-binding site is contributed by 276–290 (GPRYCPSIEDKIVRF). Gln373 provides a ligand contact to FAD.

The protein belongs to the MnmG family. Homodimer. Heterotetramer of two MnmE and two MnmG subunits. FAD is required as a cofactor.

It localises to the cytoplasm. NAD-binding protein involved in the addition of a carboxymethylaminomethyl (cmnm) group at the wobble position (U34) of certain tRNAs, forming tRNA-cmnm(5)s(2)U34. The sequence is that of tRNA uridine 5-carboxymethylaminomethyl modification enzyme MnmG from Streptococcus pneumoniae (strain Hungary19A-6).